A 138-amino-acid polypeptide reads, in one-letter code: Protein PsiE homolog (138 aa).

Transmembrane regions (helical) follow at residues 14–34, 56–76, 84–104, and 109–129; these read LQAL…GLLI, YEML…ALII, HFPL…LIII, and AIST…FFIV.

This sequence belongs to the PsiE family.

The protein resides in the cell membrane. The polypeptide is Protein PsiE homolog (Bacillus velezensis (strain DSM 23117 / BGSC 10A6 / LMG 26770 / FZB42) (Bacillus amyloliquefaciens subsp. plantarum)).